Reading from the N-terminus, the 613-residue chain is Forkhead box protein O (613 aa).

Disordered regions lie at residues 39–90 (RARS…KNSS), 182–205 (KSVR…RAKK), 217–269 (GLND…RLSP), and 317–360 (QGFS…PASG). The residue at position 44 (T44) is a Phosphothreonine; by PKB/AKT1. The segment covering 63 to 80 (TKASNQQLAPGDSQQAIQ) has biased composition (polar residues). The residue at position 75 (S75) is a Phosphoserine. The segment covering 81-90 (NANAAKKNSS) has biased composition (low complexity). Positions 95–201 (WGNLSYADLI…ETSRYEKRRG (107 aa)) form a DNA-binding region, fork-head. At S190 the chain carries Phosphoserine; by PKB/AKT1. 2 stretches are compositionally biased toward polar residues: residues 221–230 (ATPSPSSSVS) and 256–265 (RASSNASSCG). S259 is subject to Phosphoserine; by PKB/AKT1. A phosphoserine mark is found at S262, S263, and S268. A compositionally biased stretch (pro residues) spans 327-336 (SQPPPPPYQP). The segment covering 337–353 (PQHQQAQQQQQQQSPYA) has biased composition (low complexity).

Interacts with melt.

It is found in the cytoplasm. The protein resides in the nucleus. In terms of biological role, transcription factor involved in the regulation of the insulin signaling pathway. Consistently activates both the downstream target Thor\d4EBP and the feedback control target InR. Involved in negative regulation of the cell cycle, modulating cell growth and proliferation. In response to cellular stresses, such as nutrient deprivation or increased levels of reactive oxygen species, foxo is activated and inhibits growth through the action of target genes such as Thor. Foxo activated in the adult fat body can regulate lifespan in adults; an insulin peptide itself may function as one secondary messenger of insulin-regulated aging. Also regulates Lip4, homolog of human acid lipases, thereby acting as a key modulator of lipid metabolism by insulin signaling and integrates insulin responses to glucose and lipid homeostasis. This chain is Forkhead box protein O, found in Drosophila melanogaster (Fruit fly).